We begin with the raw amino-acid sequence, 452 residues long: Down-regulator of invasive growth 1 (452 aa).

Disordered regions lie at residues 1–145 (MAVS…SAPA) and 262–311 (RNKR…ADLR). Polar residues-rich tracts occupy residues 12–22 (EDTSIAKSTQD) and 35–53 (KGSSDSNIKNSPGGNSVGQ). Residue Ser45 is modified to Phosphoserine. The segment covering 61–77 (PEEDDSGDKEADHEDSE) has biased composition (acidic residues). The span at 81–100 (AKKRKAQPLKNPKKSLKRGR) shows a compositional bias: basic residues. 4 stretches are compositionally biased toward polar residues: residues 107–116 (LSDSNTNTHG), 124–145 (LASSNSAHFPPVANQNVKSAPA), 269–281 (SYDSPLSGTASTG), and 291–307 (RNSSVGSSANAGPTQQR). Phosphoserine is present on residues Ser126, Ser142, Ser272, and Ser275. An interaction with FUS3 and KSS1 region spans residues 212 to 452 (IPPPHMLNKP…KSSSHHRTGK (241 aa)). Ser330 carries the post-translational modification Phosphoserine. Low complexity predominate over residues 331 to 348 (ANTKARSASTSTSTSTST). Positions 331-395 (ANTKARSAST…QRTSQPQQQS (65 aa)) are disordered. The span at 349–361 (NRDRSSWHEAEPN) shows a compositional bias: basic and acidic residues. The span at 362 to 372 (KDEEEGTDLAI) shows a compositional bias: acidic residues. Low complexity predominate over residues 378 to 395 (PTPTFTTFQRTSQPQQQS). Residue Thr379 is modified to Phosphothreonine. Phosphoserine occurs at positions 395 and 428.

Forms a complex with DIG2, STE12 and either FUS3 or KSS1. The interaction of FUS3 with STE12 depends on the presence of both DIG1 and DIG2. STE12 is lost from FUS3/DIG1/DIG2 complex after pheromone treatment. DIG1 and DIG2 have also been reported to interact with CLN1 and CLN2. Phosphorylated by FUS3 and KSS1, in a pheromone-stimulated manner. Phosphorylation reduces the affinity for STE12.

It is found in the nucleus. Its function is as follows. DIG1 and DIG2 are negative regulators of the filamentation and pheromone induced mating program. DIG1 and DIG2 inhibit the transcriptional activity of STE12 by direct protein-protein interaction. DIG1 colocalizes to promoters with STE12 and redistributes with it during induction of filamentation (by butanol) or mating (by pheromone) to program specific genes, but binding of DIG1 to STE12 is reduced by pheromone treatment. This chain is Down-regulator of invasive growth 1 (DIG1), found in Saccharomyces cerevisiae (strain ATCC 204508 / S288c) (Baker's yeast).